Here is a 447-residue protein sequence, read N- to C-terminus: Tubulin beta chain (447 aa).

Residues Gln-11, Glu-69, Ser-138, Gly-142, Thr-143, Gly-144, Asn-204, and Asn-226 each coordinate GTP. Glu-69 is a Mg(2+) binding site. The disordered stretch occupies residues 424–447 (QYQDASISEGEEDYEEEPQVENEE). Positions 432 to 447 (EGEEDYEEEPQVENEE) are enriched in acidic residues.

Belongs to the tubulin family. Dimer of alpha and beta chains. A typical microtubule is a hollow water-filled tube with an outer diameter of 25 nm and an inner diameter of 15 nM. Alpha-beta heterodimers associate head-to-tail to form protofilaments running lengthwise along the microtubule wall with the beta-tubulin subunit facing the microtubule plus end conferring a structural polarity. Microtubules usually have 13 protofilaments but different protofilament numbers can be found in some organisms and specialized cells. Requires Mg(2+) as cofactor.

The protein resides in the cytoplasm. It is found in the cytoskeleton. Tubulin is the major constituent of microtubules, a cylinder consisting of laterally associated linear protofilaments composed of alpha- and beta-tubulin heterodimers. Microtubules grow by the addition of GTP-tubulin dimers to the microtubule end, where a stabilizing cap forms. Below the cap, tubulin dimers are in GDP-bound state, owing to GTPase activity of alpha-tubulin. The polypeptide is Tubulin beta chain (Uncinula necator (Grape powdery mildew)).